An 848-amino-acid chain; its full sequence is Neurofilament medium polypeptide (848 aa).

Positions 1–10 (MSYTLDSLGN) are enriched in polar residues. Residues 1 to 51 (MSYTLDSLGNPSAYRRVTETRSSFSRVSGSPSSGFRSQSWSRGSPSTVSSS) are disordered. N-acetylserine is present on Ser-2. The tract at residues 2-102 (SYTLDSLGNP…KLSRSNEKEQ (101 aa)) is head. Residues 21 to 44 (RSSFSRVSGSPSSGFRSQSWSRGS) show a composition bias toward low complexity. Ser-30 carries the phosphoserine modification. Arg-42 is modified (omega-N-methylarginine). Thr-47 carries an O-linked (GlcNAc) threonine glycan. A Phosphoserine modification is found at Ser-97. The IF rod domain maps to 99-410 (EKEQLQGLND…KLLEGEETRF (312 aa)). The segment at 103 to 134 (LQGLNDRFAGYIEKVHYLEQQNKEIEAEIQAL) is coil 1A. Residues 135–147 (RQKQASHAQLGDA) are linker 1. The interval 148-246 (YDQEIRELRA…EEEVADLLAQ (99 aa)) is coil 1B. A Phosphoserine modification is found at Ser-224. Residues 247–263 (IQASHITVERKDYLKTD) form a linker 12 region. Residues 264-285 (ISTALKEIRSQLECHSDQNMHQ) are coil 2A. The linker 2 stretch occupies residues 286-289 (AEEW). The interval 290–410 (FKCRYAKLTE…KLLEGEETRF (121 aa)) is coil 2B. Tyr-318 carries the post-translational modification Phosphotyrosine. Phosphoserine occurs at positions 344, 416, and 428. The tail stretch occupies residues 411-848 (STFSGSITGP…AIVKEVTQGD (438 aa)). O-linked (GlcNAc) threonine glycosylation occurs at Thr-430. 2 positions are modified to phosphoserine: Ser-466 and Ser-482. The tract at residues 482–785 (SAKEEKEEAE…GEDSSDDKVV (304 aa)) is disordered. Residues 488-498 (EEAEEKEEEPE) are compositionally biased toward acidic residues. The span at 499-509 (AEKSPVKSPEA) shows a compositional bias: basic and acidic residues. 2 positions are modified to phosphoserine: Ser-502 and Ser-506. Acidic residues predominate over residues 510 to 533 (KEEEEEGEKEEEEEGQEEEEEEDE). The span at 534-553 (GVKSDQAEEGGSEKEGSSEK) shows a compositional bias: basic and acidic residues. 4 positions are modified to phosphoserine: Ser-537, Ser-545, Ser-550, and Ser-551. The span at 554-576 (DEGEQEEEEGETEAEGEGEEAEA) shows a compositional bias: acidic residues. Thr-565 carries the phosphothreonine modification. A compositionally biased stretch (basic and acidic residues) spans 577-604 (KEEKKIEGKVEEVAVKEEIKVEKPEKAK). 2 positions are modified to phosphoserine: Ser-605 and Ser-610. Basic and acidic residues-rich tracts occupy residues 611–677 (PVEE…KAVE) and 689–711 (SLEK…KAEE). Residue Thr-642 is modified to Phosphothreonine. Residues Ser-645, Ser-669, Ser-689, Ser-715, Ser-723, Ser-753, and Ser-769 each carry the phosphoserine modification. 2 stretches are compositionally biased toward basic and acidic residues: residues 720-732 (SDRS…KEDI) and 748-760 (TQEK…EEKG). Basic and acidic residues predominate over residues 771–785 (AEEKKGEDSSDDKVV).

The protein belongs to the intermediate filament family. Forms heterodimers with NEFL; which can further hetero-oligomerize (in vitro). Forms heterodimers with INA (in vitro). Post-translationally, there are a number of repeats of the tripeptide K-S-P, NFM is phosphorylated on a number of the serines in this motif. It is thought that phosphorylation of NFM results in the formation of interfilament cross bridges that are important in the maintenance of axonal caliber. In terms of processing, phosphorylation seems to play a major role in the functioning of the larger neurofilament polypeptides (NF-M and NF-H), the levels of phosphorylation being altered developmentally and coincidentally with a change in the neurofilament function. Phosphorylated in the head and rod regions by the PKC kinase PKN1, leading to the inhibition of polymerization. Expressed in the sciatic nerve (at protein level).

The protein resides in the cytoplasm. The protein localises to the cytoskeleton. It localises to the cell projection. Its subcellular location is the axon. Neurofilaments usually contain three intermediate filament proteins: NEFL, NEFM, and NEFH which are involved in the maintenance of neuronal caliber. May additionally cooperate with the neuronal intermediate filament proteins PRPH and INA to form neuronal filamentous networks. The chain is Neurofilament medium polypeptide (Nefm) from Mus musculus (Mouse).